A 447-amino-acid chain; its full sequence is 3-O-methyltransferase 2 (447 aa).

Residues 264-265 (GG), Asp-287, 318-319 (DF), and Arg-334 each bind S-adenosyl-L-methionine. The active-site Proton acceptor is His-338.

This sequence belongs to the class I-like SAM-binding methyltransferase superfamily. Cation-independent O-methyltransferase family. COMT subfamily.

S-adenosyl-L-methionine-dependent methyltransferase that preferentially catalyzes the methylation of 3-OH phenolic compounds like isovanillic acid and 3-OH-4-Met cinnamic acid. May play a role in promoting lignin degradation by methylating and inactivating free-hydroxyl phenolic compounds, products of lignin cleavage which are known inhibitors of lignin peroxidases. In Phanerochaete chrysosporium (strain RP-78 / ATCC MYA-4764 / FGSC 9002) (White-rot fungus), this protein is 3-O-methyltransferase 2.